Here is a 298-residue protein sequence, read N- to C-terminus: ATP synthase gamma chain (298 aa).

Belongs to the ATPase gamma chain family. As to quaternary structure, F-type ATPases have 2 components, CF(1) - the catalytic core - and CF(0) - the membrane proton channel. CF(1) has five subunits: alpha(3), beta(3), gamma(1), delta(1), epsilon(1). CF(0) has three main subunits: a, b and c.

The protein resides in the cell inner membrane. Produces ATP from ADP in the presence of a proton gradient across the membrane. The gamma chain is believed to be important in regulating ATPase activity and the flow of protons through the CF(0) complex. This chain is ATP synthase gamma chain, found in Francisella tularensis subsp. mediasiatica (strain FSC147).